Here is a 1396-residue protein sequence, read N- to C-terminus: Side tail fiber protein pb1 (1396 aa).

Disordered stretches follow at residues 51-133 (KASG…SASS) and 145-203 (ARAA…SENK). Residues 60-69 (SEINAKQSEL) are compositionally biased toward polar residues. Low complexity-rich tracts occupy residues 81-133 (SATS…SASS) and 157-181 (NSAQAADASKTAAANSATAAKTSET). Coiled coils occupy residues 187–214 (ETAAKTSETNAKTSENKAKEYLDMASEL) and 1263–1396 (TSDA…KLGM). The span at 189 to 199 (AAKTSETNAKT) shows a compositional bias: polar residues. The Peptidase S74 domain maps to 1265–1394 (DARLKNDVRA…ARLSAIEDKL (130 aa)).

As to quaternary structure, homotrimer. Interacts with the O-antigens of host lipopolysaccharides. In terms of processing, the cleaved C-terminus functions as an intramolecular chaperone and is removed by an autoproteolytic process after correct trimerization and folding.

It localises to the virion. Its function is as follows. Assembles together with p132 to form the three L-shaped long tail fibers and the collar structure at the junction between the tail tube and the conical tail tip. The three L-shaped long tail fibers recognize the host lipopolysaccharides that serve as adhesion receptor for virus entry. Each fiber consists of a thin proximal rod of about 30 nm connected by a hinge to a thicker distal part of about 47 nm. The chain is Side tail fiber protein pb1 from Escherichia coli (Enterobacteria phage T5).